Here is a 524-residue protein sequence, read N- to C-terminus: Cytokinin dehydrogenase 7 (524 aa).

The signal sequence occupies residues 1-22; that stretch reads MAARCSIAFMIMASCLSVVVSG. N-linked (GlcNAc...) asparagine glycosylation is present at asparagine 42. One can recognise an FAD-binding PCMH-type domain in the interval 55–233; the sequence is VAAAPEAVLH…TRARIGLMPA (179 aa). FAD-binding residues include glycine 91 and glycine 93. At histidine 94 the chain carries Pros-8alpha-FAD histidine. 2 residues coordinate FAD: serine 95 and glutamine 99. The N-linked (GlcNAc...) asparagine glycan is linked to asparagine 121. Positions 157, 162, 168, 172, and 223 each coordinate FAD. N-linked (GlcNAc...) asparagine glycosylation is found at asparagine 277 and asparagine 320. FAD is bound by residues tyrosine 472, serine 507, and glutamine 510.

The protein belongs to the oxygen-dependent FAD-linked oxidoreductase family. As to quaternary structure, monomer. The cofactor is FAD.

Its subcellular location is the secreted. The protein localises to the extracellular space. The enzyme catalyses N(6)-dimethylallyladenine + A + H2O = 3-methyl-2-butenal + adenine + AH2. In terms of biological role, catalyzes the oxidation of cytokinins, a family of N(6)-substituted adenine derivatives that are plant hormones, where the substituent is an isopentenyl group. The protein is Cytokinin dehydrogenase 7 (CKX7) of Oryza sativa subsp. japonica (Rice).